Consider the following 335-residue polypeptide: MLP-like protein 28 (335 aa).

Belongs to the MLP family.

Can bind steroids (in vitro), and may also bind other types of hydrophobic ligands. In Arabidopsis thaliana (Mouse-ear cress), this protein is MLP-like protein 28 (MLP28).